A 442-amino-acid chain; its full sequence is 26S proteasome regulatory subunit 6A (442 aa).

The residue at position 12 (Ser12) is a Phosphoserine. 230-237 (GPPGTGKT) serves as a coordination point for ATP. Residue Ser379 is modified to Phosphoserine.

The protein belongs to the AAA ATPase family. As to quaternary structure, component of the 19S proteasome regulatory particle complex. The 26S proteasome consists of a 20S core particle (CP) and two 19S regulatory subunits (RP). The regulatory particle is made of a lid composed of 9 subunits, a base containing 6 ATPases including PSMC3 and few additional components. Interacts with PAAF1.

It localises to the cytoplasm. Its subcellular location is the nucleus. Component of the 26S proteasome, a multiprotein complex involved in the ATP-dependent degradation of ubiquitinated proteins. This complex plays a key role in the maintenance of protein homeostasis by removing misfolded or damaged proteins, which could impair cellular functions, and by removing proteins whose functions are no longer required. Therefore, the proteasome participates in numerous cellular processes, including cell cycle progression, apoptosis, or DNA damage repair. PSMC3 belongs to the heterohexameric ring of AAA (ATPases associated with diverse cellular activities) proteins that unfolds ubiquitinated target proteins that are concurrently translocated into a proteolytic chamber and degraded into peptides. This Mus musculus (Mouse) protein is 26S proteasome regulatory subunit 6A (Psmc3).